The following is a 73-amino-acid chain: DNA-directed RNA polymerase subunit epsilon (73 aa).

Belongs to the RNA polymerase subunit epsilon family. In terms of assembly, RNAP is composed of a core of 2 alpha, a beta and a beta' subunit. The core is associated with a delta subunit, and at least one of epsilon or omega. When a sigma factor is associated with the core the holoenzyme is formed, which can initiate transcription.

The enzyme catalyses RNA(n) + a ribonucleoside 5'-triphosphate = RNA(n+1) + diphosphate. Functionally, a non-essential component of RNA polymerase (RNAP). This is DNA-directed RNA polymerase subunit epsilon from Lactobacillus helveticus (strain DPC 4571).